Here is a 1235-residue protein sequence, read N- to C-terminus: Insulin receptor substrate 1 (1235 aa).

Residue Ser-3 is modified to Phosphoserine. Residues 3 to 133 form a mediates interaction with PHIP region; the sequence is SPPDTDGFSD…AGGGCGGSCS (131 aa). Residues 12 to 115 form the PH domain; it reads DVRKVGYLRK…WYQALLQLHN (104 aa). Ser-99 is subject to Phosphoserine; by CK2. The 105-residue stretch at 155–259 folds into the IRS-type PTB domain; that stretch reads FKEVWQVILK…EAMRAMSDEF (105 aa). The interval 258 to 425 is disordered; it reads EFRPRTKSQS…SDGGFISSDE (168 aa). Phosphoserine; by RPS6KB1 occurs at positions 265 and 302. Positions 265–276 are enriched in low complexity; the sequence is SQSSSSCSNPIS. Ser-307 carries the phosphoserine; by IKKB, MAPK8 and RPS6KB1 modification. A phosphoserine mark is found at Ser-318, Ser-325, Ser-340, and Ser-343. Over residues 349 to 358 the composition is skewed to basic residues; sequence THAHRHRGSS. Low complexity-rich tracts occupy residues 378–399 and 407–419; these read SPSATSPVSLSSSSTSGHGSTS and SSASVSGSPSDGG. Position 414 is a phosphoserine (Ser-414). Residues Thr-441 and Thr-448 each carry the phosphothreonine modification. Position 460 is a phosphotyrosine; by INSR (Tyr-460). The YXXM motif 1 motif lies at 460-463; sequence YICM. Thr-502 bears the Phosphothreonine; by CK2 mark. Residues 520 to 539 form a disordered region; sequence THSAGTSPTISHQKTPSQSS. Ser-522 bears the Phosphoserine; by RPS6KB1 mark. Polar residues predominate over residues 522–539; sequence SAGTSPTISHQKTPSQSS. 2 consecutive short sequence motifs (YXXM motif) follow at residues 546–549 and 608–611; these read YTEM and YMPM. The residue at position 608 (Tyr-608) is a Phosphotyrosine; by INSR. At Ser-612 the chain carries Phosphoserine. Tyr-628 carries the post-translational modification Phosphotyrosine; by INSR. The YXXM motif 4 motif lies at 628–631; it reads YMPM. Position 632 is a phosphoserine; by RPS6KB1 and ROCK2 (Ser-632). A Phosphotyrosine modification is found at Tyr-658. The YXXM motif 5 motif lies at 658 to 661; that stretch reads YMMM. The segment covering 669–689 has biased composition (low complexity); that stretch reads PDIGGGSCSSSSISAAPSGSS. The segment at 669 to 720 is disordered; it reads PDIGGGSCSSSSISAAPSGSSYGKPWTNGVGGHHTHALPHAKPPVESGGGKL. A YXXM motif 6 motif is present at residues 727-730; sequence YMNM. The tract at residues 766 to 921 is disordered; the sequence is FKHTQRPGEP…ATSRSSPSVR (156 aa). Positions 771 to 780 are enriched in basic and acidic residues; sequence RPGEPEEGAR. Composition is skewed to low complexity over residues 785 to 794, 801 to 810, and 872 to 881; these read RLSSSSGRLR, DSSSSTSSDS, and QQQQQQQQQQ. Residue Ser-789 is modified to Phosphoserine; by AMPK and SIK2. Ser-891 carries the phosphoserine modification. Tyr-895, Tyr-939, and Tyr-987 each carry phosphotyrosine; by INSR. The GRB2-binding stretch occupies residues 895–897; it reads YVN. 3 consecutive short sequence motifs (YXXM motif) follow at residues 939–942, 987–990, and 1010–1013; these read YMNM, YMTM, and YADM. A disordered region spans residues 1024–1165; it reads LPRTTGAAPP…SAPGCGAAGG (142 aa). The segment covering 1025-1046 has biased composition (low complexity); the sequence is PRTTGAAPPPSSTASASASVTP. Residues 1072 to 1084 are compositionally biased toward polar residues; that stretch reads TRVNLSPNHNQSA. Ser-1099 bears the Phosphoserine mark. Ser-1100 carries the post-translational modification Phosphoserine; by RPS6KB1. Polar residues predominate over residues 1101–1114; it reads ETFSAPTRAANTVS. Gly residues predominate over residues 1118–1128; sequence GAAGGGSGGGS. Phosphotyrosine; by INSR is present on Tyr-1172. A disordered region spans residues 1177–1235; sequence LVKDVKQHPQDCPSQQQSLPPPPPHQPLGSNEGSSPRRSSEDLSTYASINFQKQPEDRQ. A Glycyl lysine isopeptide (Lys-Gly) (interchain with G-Cter in ubiquitin) cross-link involves residue Lys-1179. A compositionally biased stretch (polar residues) spans 1204–1229; that stretch reads LGSNEGSSPRRSSEDLSTYASINFQK. At Tyr-1222 the chain carries Phosphotyrosine; by INSR.

As to quaternary structure, interacts with SOCS7. Interacts (via IRS-type PTB domain) with IGF1R and INSR (via the tyrosine-phosphorylated NPXY motif). Interacts with UBTF, FER and PIK3CA. Interacts (via phosphorylated YXXM motifs) with PIK3R1. Interacts with ROCK1. Interacts (via PH domain) with PHIP. Interacts with GRB2. Interacts with ALK. Interacts with EIF2AK2/PKR. Interacts with GKAP1. Interacts with DGKZ in the absence of insulin; insulin stimulation decreases this interaction. Found in a ternary complex with DGKZ and PIP5K1A in the absence of insulin stimulation. Interacts with SQSTM1; the interaction is disrupted by the presence of tensin TNS2. Interacts with NCK1 (via SH2 domain). Interacts with NCK2 (via SH3 domain). Interacts with SH2B1; this interaction enhances leptin-induced activation of the PI3-kinase pathway. Interacts with DVL2; this interaction promotes the Wnt/beta-catenin signaling pathway. Interacts with JAK1. In terms of processing, serine phosphorylation of IRS1 is a mechanism for insulin resistance. Ser-307 phosphorylation inhibits insulin action through disruption of IRS1 interaction with the insulin receptor, and Ser-789 phosphorylation is increased in the liver of insulin-resistant rats. Phosphorylation of Tyr-895 is required for GRB2-binding. Phosphorylated by ALK. Phosphorylated at Ser-265, Ser-302, Ser-632 and Ser-1100 by RPS6KB1; phosphorylation induces accelerated degradation of IRS1. Phosphorylated on tyrosine residues in response to insulin. In skeletal muscles, dephosphorylated on Tyr-608 by TNS2 under anabolic conditions; dephosphorylation results in the proteasomal degradation of IRS1. Post-translationally, ubiquitinated by the Cul7-RING(FBXW8) complex in a mTOR-dependent manner, leading to its degradation: the Cul7-RING(FBXW8) complex recognizes and binds IRS1 previously phosphorylated by S6 kinase (RPS6KB1 or RPS6KB2). Ubiquitinated by TRAF4 through 'Lys-29' linkage; this ubiquitination regulates the interaction of IRS1 with IGFR and IRS1 tyrosine phosphorylation upon IGF1 stimulation. S-nitrosylation at by BLVRB inhibits its activity.

The protein localises to the cytoplasm. It localises to the nucleus. In terms of biological role, signaling adapter protein that participates in the signal transduction from two prominent receptor tyrosine kinases, insulin receptor/INSR and insulin-like growth factor I receptor/IGF1R. Plays therefore an important role in development, growth, glucose homeostasis as well as lipid metabolism. Upon phosphorylation by the insulin receptor, functions as a signaling scaffold that propagates insulin action through binding to SH2 domain-containing proteins including the p85 regulatory subunit of PI3K, NCK1, NCK2, GRB2 or SHP2. Recruitment of GRB2 leads to the activation of the guanine nucleotide exchange factor SOS1 which in turn triggers the Ras/Raf/MEK/MAPK signaling cascade. Activation of the PI3K/AKT pathway is responsible for most of insulin metabolic effects in the cell, and the Ras/Raf/MEK/MAPK is involved in the regulation of gene expression and in cooperation with the PI3K pathway regulates cell growth and differentiation. Acts a positive regulator of the Wnt/beta-catenin signaling pathway through suppression of DVL2 autophagy-mediated degradation leading to cell proliferation. The sequence is that of Insulin receptor substrate 1 (Irs1) from Rattus norvegicus (Rat).